Here is a 157-residue protein sequence, read N- to C-terminus: Protein Smg (157 aa).

Belongs to the Smg family.

This is Protein Smg from Pectobacterium carotovorum subsp. carotovorum (strain PC1).